The primary structure comprises 541 residues: Formimidoyltransferase-cyclodeaminase (541 aa).

The segment at 1-181 is formiminotransferase N-subdomain; the sequence is MSQLVECVPN…GATVAGARKF (181 aa). His82 functions as the For formimidoyltransferase activity in the catalytic mechanism. 163–172 contacts folate; sequence GPSAFVPSWG. Positions 182–326 are formiminotransferase C-subdomain; sequence LLAFNINLLS…PKERIIEYLV (145 aa). The linker stretch occupies residues 327–334; the sequence is PEAGPEQS. The segment at 335 to 541 is cyclodeaminase/cyclohydrolase; it reads LLHKPLRTFV…VLDRLEARQA (207 aa). Catalysis depends on Asp412, which acts as the For cyclodeaminase activity. Ser520 carries the post-translational modification Phosphoserine.

This sequence in the C-terminal section; belongs to the cyclodeaminase/cyclohydrolase family. It in the N-terminal section; belongs to the formiminotransferase family. Homooctamer, including four polyglutamate binding sites. The subunits are arranged as a tetramer of dimers, and form a planar ring-shaped structure.

The protein localises to the cytoplasm. It is found in the cytosol. It localises to the golgi apparatus. Its subcellular location is the cytoskeleton. The protein resides in the microtubule organizing center. The protein localises to the centrosome. It is found in the centriole. The catalysed reaction is 5-formimidoyltetrahydrofolate + L-glutamate = N-formimidoyl-L-glutamate + (6S)-5,6,7,8-tetrahydrofolate. It catalyses the reaction 5-formimidoyltetrahydrofolate + 2 H(+) = (6R)-5,10-methenyltetrahydrofolate + NH4(+). The protein operates within amino-acid degradation; L-histidine degradation into L-glutamate; L-glutamate from N-formimidoyl-L-glutamate (transferase route): step 1/1. In terms of biological role, folate-dependent enzyme, that displays both transferase and deaminase activity. Serves to channel one-carbon units from formiminoglutamate to the folate pool. Its function is as follows. Binds and promotes bundling of vimentin filaments originating from the Golgi. In Sus scrofa (Pig), this protein is Formimidoyltransferase-cyclodeaminase (FTCD).